The sequence spans 400 residues: Nicotinate phosphoribosyltransferase (400 aa).

Histidine 220 carries the post-translational modification Phosphohistidine; by autocatalysis.

Belongs to the NAPRTase family. Post-translationally, transiently phosphorylated on a His residue during the reaction cycle. Phosphorylation strongly increases the affinity for substrates and increases the rate of nicotinate D-ribonucleotide production. Dephosphorylation regenerates the low-affinity form of the enzyme, leading to product release.

The enzyme catalyses nicotinate + 5-phospho-alpha-D-ribose 1-diphosphate + ATP + H2O = nicotinate beta-D-ribonucleotide + ADP + phosphate + diphosphate. Its pathway is cofactor biosynthesis; NAD(+) biosynthesis; nicotinate D-ribonucleotide from nicotinate: step 1/1. Its function is as follows. Catalyzes the synthesis of beta-nicotinate D-ribonucleotide from nicotinate and 5-phospho-D-ribose 1-phosphate at the expense of ATP. This chain is Nicotinate phosphoribosyltransferase, found in Enterobacter sp. (strain 638).